Here is a 199-residue protein sequence, read N- to C-terminus: Protein extra-macrochaetae (199 aa).

Residues 23–75 (RIQRHPTHRGDGENAEMKMYLSKLKDLVPFMPKNRKLTKLEIIQHVIDYICDL) enclose the bHLH domain. Ser-106 bears the Phosphoserine mark. The tract at residues 127 to 199 (RLNAEQPAKV…QNAEKDSRQS (73 aa)) is disordered. Residues 161–182 (QQHQQQQQLQLQQQQLQSQQQL) are compositionally biased toward low complexity.

As to quaternary structure, heterodimer with other HLH proteins.

It localises to the nucleus. In terms of biological role, participates in sensory organ patterning by antagonizing the neurogenic activity of the Achaete-scute complex (AS-C). It lacks a basic DNA-binding domain but is able to form heterodimers with other HLH proteins, thereby inhibiting DNA binding. May sequester proneural proteins in complexes inefficient for DNA interaction. EMC also affects vein differentiation. Inhibits the activity of AS-C proteins by forming an non-DNA binding heterodimer. The polypeptide is Protein extra-macrochaetae (emc) (Drosophila melanogaster (Fruit fly)).